A 452-amino-acid chain; its full sequence is Sesamin methylene transferase (452 aa).

The protein belongs to the GcvT family. As to quaternary structure, homotrimer.

It catalyses the reaction (+)-sesamin + (6S)-5,6,7,8-tetrahydrofolyl-(gamma-L-Glu)(n) = (+)-sesamin monocatechol + (6R)-5,10-methylenetetrahydrofolyl-(gamma-L-Glu)(n). It carries out the reaction (+)-sesamin monocatechol + (6S)-5,6,7,8-tetrahydrofolyl-(gamma-L-Glu)(n) = (+)-sesamin dicatechol + (6R)-5,10-methylenetetrahydrofolyl-(gamma-L-Glu)(n). Its function is as follows. Converts sesamin into sesamin mono- and di-catechol. Catalyzes a ring cleavage to transfer the methylene group to tetrahydrofolate (THF). Also active with (+)-episesamin, (-)-asarinin, sesaminol, (+)-sesamolin and piperine. This Sinomonas sp. (strain No.22) protein is Sesamin methylene transferase.